A 341-amino-acid chain; its full sequence is Holliday junction branch migration complex subunit RuvB (341 aa).

Residues 1 to 182 (MTDADPTLRP…FGIPTRLLFY (182 aa)) form a large ATPase domain (RuvB-L) region. Residues L21, R22, G63, K66, T67, T68, 129–131 (EDF), R172, Y182, and R219 contribute to the ATP site. Residue T67 participates in Mg(2+) binding. The small ATPAse domain (RuvB-S) stretch occupies residues 183–253 (TVDELFEIVS…LADHALTRLG (71 aa)). A head domain (RuvB-H) region spans residues 256 to 341 (QLGLDGADRR…RPPGQSDLFG (86 aa)). DNA-binding residues include R292, R311, and R316.

Belongs to the RuvB family. In terms of assembly, homohexamer. Forms an RuvA(8)-RuvB(12)-Holliday junction (HJ) complex. HJ DNA is sandwiched between 2 RuvA tetramers; dsDNA enters through RuvA and exits via RuvB. An RuvB hexamer assembles on each DNA strand where it exits the tetramer. Each RuvB hexamer is contacted by two RuvA subunits (via domain III) on 2 adjacent RuvB subunits; this complex drives branch migration. In the full resolvosome a probable DNA-RuvA(4)-RuvB(12)-RuvC(2) complex forms which resolves the HJ.

Its subcellular location is the cytoplasm. The enzyme catalyses ATP + H2O = ADP + phosphate + H(+). In terms of biological role, the RuvA-RuvB-RuvC complex processes Holliday junction (HJ) DNA during genetic recombination and DNA repair, while the RuvA-RuvB complex plays an important role in the rescue of blocked DNA replication forks via replication fork reversal (RFR). RuvA specifically binds to HJ cruciform DNA, conferring on it an open structure. The RuvB hexamer acts as an ATP-dependent pump, pulling dsDNA into and through the RuvAB complex. RuvB forms 2 homohexamers on either side of HJ DNA bound by 1 or 2 RuvA tetramers; 4 subunits per hexamer contact DNA at a time. Coordinated motions by a converter formed by DNA-disengaged RuvB subunits stimulates ATP hydrolysis and nucleotide exchange. Immobilization of the converter enables RuvB to convert the ATP-contained energy into a lever motion, pulling 2 nucleotides of DNA out of the RuvA tetramer per ATP hydrolyzed, thus driving DNA branch migration. The RuvB motors rotate together with the DNA substrate, which together with the progressing nucleotide cycle form the mechanistic basis for DNA recombination by continuous HJ branch migration. Branch migration allows RuvC to scan DNA until it finds its consensus sequence, where it cleaves and resolves cruciform DNA. The sequence is that of Holliday junction branch migration complex subunit RuvB from Ruegeria pomeroyi (strain ATCC 700808 / DSM 15171 / DSS-3) (Silicibacter pomeroyi).